The following is a 163-amino-acid chain: Nucleotide-binding protein Clos_1967 (163 aa).

The protein belongs to the YajQ family.

Functionally, nucleotide-binding protein. The polypeptide is Nucleotide-binding protein Clos_1967 (Alkaliphilus oremlandii (strain OhILAs) (Clostridium oremlandii (strain OhILAs))).